A 305-amino-acid polypeptide reads, in one-letter code: tRNA dimethylallyltransferase (305 aa).

An ATP-binding site is contributed by 14 to 21 (GPTASGKT). 16–21 (TASGKT) lines the substrate pocket. Interaction with substrate tRNA regions lie at residues 39-42 (DSAL), 163-167 (QRIIR), and 243-248 (RCVGYR).

It belongs to the IPP transferase family. As to quaternary structure, monomer. It depends on Mg(2+) as a cofactor.

It catalyses the reaction adenosine(37) in tRNA + dimethylallyl diphosphate = N(6)-dimethylallyladenosine(37) in tRNA + diphosphate. Functionally, catalyzes the transfer of a dimethylallyl group onto the adenine at position 37 in tRNAs that read codons beginning with uridine, leading to the formation of N6-(dimethylallyl)adenosine (i(6)A). This Vesicomyosocius okutanii subsp. Calyptogena okutanii (strain HA) protein is tRNA dimethylallyltransferase.